A 388-amino-acid chain; its full sequence is Galactokinase (388 aa).

Position 32-35 (32-35) interacts with substrate; that stretch reads EHTD. Residues Ser66 and 123 to 129 each bind ATP; that span reads GASLSSS. Mg(2+) contacts are provided by Ser129 and Glu161. Asp173 (proton acceptor) is an active-site residue. Tyr223 lines the substrate pocket.

The protein belongs to the GHMP kinase family. GalK subfamily.

The protein resides in the cytoplasm. The catalysed reaction is alpha-D-galactose + ATP = alpha-D-galactose 1-phosphate + ADP + H(+). Its pathway is carbohydrate metabolism; galactose metabolism. In terms of biological role, catalyzes the transfer of the gamma-phosphate of ATP to D-galactose to form alpha-D-galactose-1-phosphate (Gal-1-P). In Staphylococcus carnosus (strain TM300), this protein is Galactokinase.